Reading from the N-terminus, the 788-residue chain is Choline transporter-like protein 1 (788 aa).

Residues 98–118 (FLFFVFLCGWVVVASLGIMWG) traverse the membrane as a helical segment. Residue Asn-276 is glycosylated (N-linked (GlcNAc...) asparagine). A run of 4 helical transmembrane segments spans residues 329-349 (WWQT…WTVI), 352-372 (LLGS…LGFG), 409-429 (FVVA…ILFI), and 458-478 (LFPF…AIWL). N-linked (GlcNAc...) asparagine glycosylation occurs at Asn-497. Helical transmembrane passes span 531–551 (LFAF…ALAG), 583–603 (LGSI…RVML), 620–640 (WFLM…KFLT), 679–699 (AGIL…ILSF), and 718–738 (YYFV…DLFF).

This sequence belongs to the CTL (choline transporter-like) family.

The protein resides in the membrane. In Caenorhabditis briggsae, this protein is Choline transporter-like protein 1 (chtl-1).